The following is a 286-amino-acid chain: tRNA (guanine-N(7)-)-methyltransferase (286 aa).

2 positions are modified to phosphoserine: Ser-7 and Ser-59. Residues Gly-103, 126 to 127 (EI), 161 to 162 (NA), and Cys-181 each bind S-adenosyl-L-methionine. The active site involves Asp-184. 259-261 (TEE) is a binding site for S-adenosyl-L-methionine.

This sequence belongs to the class I-like SAM-binding methyltransferase superfamily. TrmB family. In terms of assembly, forms a complex with TRM82.

Its subcellular location is the nucleus. The catalysed reaction is guanosine(46) in tRNA + S-adenosyl-L-methionine = N(7)-methylguanosine(46) in tRNA + S-adenosyl-L-homocysteine. It functions in the pathway tRNA modification; N(7)-methylguanine-tRNA biosynthesis. Its function is as follows. Methyltransferase that catalyzes the formation of N(7)-methylguanine at position 46 (m7G46) in tRNA, a modification required to maintain stability of tRNAs; its absence resulting in tRNA decay. Both the D-stem and T-stem structures of tRNAs are required for efficient methyltransferase activity. The protein is tRNA (guanine-N(7)-)-methyltransferase of Saccharomyces cerevisiae (strain RM11-1a) (Baker's yeast).